A 671-amino-acid chain; its full sequence is DNA ligase (671 aa).

Residues 32 to 36, 81 to 82, and glutamate 113 contribute to the NAD(+) site; these read DAEYD and SL. Lysine 115 functions as the N6-AMP-lysine intermediate in the catalytic mechanism. NAD(+) contacts are provided by arginine 136, glutamate 173, lysine 290, and lysine 314. 4 residues coordinate Zn(2+): cysteine 408, cysteine 411, cysteine 426, and cysteine 432. The 79-residue stretch at 593 to 671 folds into the BRCT domain; that stretch reads EIDSPFAGKT…EAEMIRLLGA (79 aa).

Belongs to the NAD-dependent DNA ligase family. LigA subfamily. It depends on Mg(2+) as a cofactor. Mn(2+) is required as a cofactor.

The enzyme catalyses NAD(+) + (deoxyribonucleotide)n-3'-hydroxyl + 5'-phospho-(deoxyribonucleotide)m = (deoxyribonucleotide)n+m + AMP + beta-nicotinamide D-nucleotide.. Its function is as follows. DNA ligase that catalyzes the formation of phosphodiester linkages between 5'-phosphoryl and 3'-hydroxyl groups in double-stranded DNA using NAD as a coenzyme and as the energy source for the reaction. It is essential for DNA replication and repair of damaged DNA. In Salmonella dublin (strain CT_02021853), this protein is DNA ligase.